A 221-amino-acid chain; its full sequence is MTETAATETTPAAPPAEPKQKKKQQPKKAAGGAKAKKPSGPSASELIVKSVSASKERGGVSLAALKKALAAGGYNVERNNSRLKLALKALVTKGTLTQVKGSGASGSFKLNKKQLETKVKAVAKKKLVAPKAKKPVAAKKKPKSPKKPKKVSAAAAKSPKKAKKPVKAAKSPKKPKAVKPKKVTKSPAKKATKPKAAKAKIAKPKIAKAKAAKGKKAAAKK.

Composition is skewed to low complexity over residues 1–11 and 27–44; these read MTETAATETTP and KKAA…PSAS. 2 disordered regions span residues 1-44 and 123-221; these read MTET…PSAS and AKKK…AAKK. The region spanning 39-112 is the H15 domain; it reads SGPSASELIV…GASGSFKLNK (74 aa). Composition is skewed to basic residues over residues 123 to 150 and 158 to 221; these read AKKK…KPKK and SPKK…AAKK.

It belongs to the histone H1/H5 family.

It is found in the nucleus. The protein localises to the chromosome. Functionally, histones H1 are necessary for the condensation of nucleosome chains into higher-order structures. This chain is Histone H1C, found in Xenopus laevis (African clawed frog).